A 207-amino-acid chain; its full sequence is Ribosomal RNA small subunit methyltransferase G (207 aa).

S-adenosyl-L-methionine-binding positions include Gly-74, Leu-79, 125–126, and Arg-140; that span reads VE.

This sequence belongs to the methyltransferase superfamily. RNA methyltransferase RsmG family.

It is found in the cytoplasm. It catalyses the reaction guanosine(527) in 16S rRNA + S-adenosyl-L-methionine = N(7)-methylguanosine(527) in 16S rRNA + S-adenosyl-L-homocysteine. Functionally, specifically methylates the N7 position of guanine in position 527 of 16S rRNA. The chain is Ribosomal RNA small subunit methyltransferase G from Shewanella loihica (strain ATCC BAA-1088 / PV-4).